Here is a 304-residue protein sequence, read N- to C-terminus: Pyridoxal 5'-phosphate synthase subunit pyroA (304 aa).

Position 28 (Asp-28) interacts with D-ribose 5-phosphate. Lys-85 functions as the Schiff-base intermediate with D-ribose 5-phosphate in the catalytic mechanism. Gly-157 is a binding site for D-ribose 5-phosphate. D-glyceraldehyde 3-phosphate is bound at residue Arg-169. Residues Gly-224 and 245 to 246 (GS) contribute to the D-ribose 5-phosphate site.

This sequence belongs to the PdxS/SNZ family.

The enzyme catalyses aldehydo-D-ribose 5-phosphate + D-glyceraldehyde 3-phosphate + L-glutamine = pyridoxal 5'-phosphate + L-glutamate + phosphate + 3 H2O + H(+). It participates in cofactor biosynthesis; pyridoxal 5'-phosphate biosynthesis. In terms of biological role, catalyzes the formation of pyridoxal 5'-phosphate from ribose 5-phosphate (RBP), glyceraldehyde 3-phosphate (G3P) and ammonia. The ammonia is provided by PDX2. Can also use ribulose 5-phosphate and dihydroxyacetone phosphate as substrates, resulting from enzyme-catalyzed isomerization of RBP and G3P, respectively. Also plays an indirect role in resistance to singlet oxygen-generating photosensitizers. The sequence is that of Pyridoxal 5'-phosphate synthase subunit pyroA (pyroA) from Emericella nidulans (strain FGSC A4 / ATCC 38163 / CBS 112.46 / NRRL 194 / M139) (Aspergillus nidulans).